Reading from the N-terminus, the 646-residue chain is Beta-mannosyltransferase 6 (646 aa).

Over 1–25 (MGNYKPSIKQYVVTVKAIKSSQFGR) the chain is Cytoplasmic. The helical transmembrane segment at 26-46 (LGICAVVLLFVLGYPFYFISN) threads the bilayer. The Extracellular segment spans residues 47–646 (NPFDTSIRYQ…LTGGWLPSHN (600 aa)). N-linked (GlcNAc...) asparagine glycans are attached at residues Asn-62, Asn-81, Asn-103, Asn-117, Asn-127, Asn-132, Asn-146, Asn-334, and Asn-393.

Belongs to the BMT family.

The protein resides in the membrane. Functionally, beta-mannosyltransferase involved in cell wall biosynthesis. Required for beta-1,2-mannose transfer on phospholipomannan. Required for pro-inflammatory response in macrophages through phospholipomannan-induced TNF-alpha production. This Candida albicans (strain SC5314 / ATCC MYA-2876) (Yeast) protein is Beta-mannosyltransferase 6 (BMT6).